Reading from the N-terminus, the 152-residue chain is Leptin (152 aa).

Positions 1–26 (MDHILALVLALLPLSLCVALPGALDA) are cleaved as a signal peptide. A disulfide bridge links C109 with C152.

This sequence belongs to the leptin family. In terms of tissue distribution, expressed mostly in the liver.

It is found in the secreted. Functionally, may function as part of a signaling pathway that acts to regulate the size of the body fat depot. This chain is Leptin (lep), found in Takifugu rubripes (Japanese pufferfish).